A 245-amino-acid polypeptide reads, in one-letter code: MAPK-interacting and spindle-stabilizing protein-like (245 aa).

The tract at residues 1 to 245 (MSDEFSLADA…PMPGGPHSYH (245 aa)) is disordered. At serine 2 the chain carries N-acetylserine. Phosphoserine is present on residues serine 2, serine 6, and serine 15. The segment covering 17-26 (AKTSAVSNTK) has biased composition (polar residues). Residues 34-51 (WPGSNPWNNPSAPSSVPS) show a composition bias toward low complexity. Composition is skewed to pro residues over residues 74–127 (SVPP…PELP), 164–190 (PNMP…PPVP), and 198–207 (AWGPPAPYPA).

Belongs to the MISS family.

This Homo sapiens (Human) protein is MAPK-interacting and spindle-stabilizing protein-like (MAPK1IP1L).